Consider the following 187-residue polypeptide: Peptidyl-tRNA hydrolase (187 aa).

Tyrosine 14 is a tRNA binding site. Catalysis depends on histidine 19, which acts as the Proton acceptor. Residues tyrosine 64, asparagine 66, and asparagine 112 each contribute to the tRNA site.

Belongs to the PTH family. In terms of assembly, monomer.

Its subcellular location is the cytoplasm. It carries out the reaction an N-acyl-L-alpha-aminoacyl-tRNA + H2O = an N-acyl-L-amino acid + a tRNA + H(+). Its function is as follows. Hydrolyzes ribosome-free peptidyl-tRNAs (with 1 or more amino acids incorporated), which drop off the ribosome during protein synthesis, or as a result of ribosome stalling. In terms of biological role, catalyzes the release of premature peptidyl moieties from peptidyl-tRNA molecules trapped in stalled 50S ribosomal subunits, and thus maintains levels of free tRNAs and 50S ribosomes. This Bdellovibrio bacteriovorus (strain ATCC 15356 / DSM 50701 / NCIMB 9529 / HD100) protein is Peptidyl-tRNA hydrolase.